The sequence spans 181 residues: Large ribosomal subunit protein uL16 (181 aa).

The protein belongs to the universal ribosomal protein uL16 family.

The polypeptide is Large ribosomal subunit protein uL16 (Pyrococcus abyssi (strain GE5 / Orsay)).